We begin with the raw amino-acid sequence, 263 residues long: N-acyl homoserine lactonase AttM (263 aa).

Residues H103, H105, D107, H108, H180, D202, and H247 each coordinate Zn(2+).

This sequence belongs to the metallo-beta-lactamase superfamily. It depends on Zn(2+) as a cofactor.

It catalyses the reaction an N-acyl-L-homoserine lactone + H2O = an N-acyl-L-homoserine + H(+). This is N-acyl homoserine lactonase AttM (attM) from Rhizobium radiobacter (Agrobacterium tumefaciens).